The chain runs to 410 residues: MVLSQRQRDELNRAIADYLRSNGYEEAYSVFKKEAELDMNEELDKKYAGLLEKKWTSVIRLQKKVMELESKLNEAKEEINIGGPIGQKRDPKEWIPRPPEKYALSGHRSPVTRVIFHPVFSVIVSASEDATIKVWDHETGDFERTLKGHTDSVQDISFDHTGKLLASCSADMTIKLWDFQGFECIRTMHGHDHNVSSVAIMPNGDHIVSASRDKTIKMWEVATGYCVKTFTGHREWVRMVRPNQDGTLIASSSNDQTVRVWVVATKECKAELREHEHVVECISWAPESAHPTILEATGSETKKSGKPGPFLLSGSRDKTIKMWDVSIGMCLMTLVGHDNWVRGVLVHPGGKYIVSCADDKTLRIWDYKNKRCTKTLSAHEHFVTSLDFHKTAPYVVTGSVDQTVKVWECR.

A LisH domain is found at 7–39 (QRDELNRAIADYLRSNGYEEAYSVFKKEAELDM). Residues 56–83 (TSVIRLQKKVMELESKLNEAKEEINIGG) adopt a coiled-coil conformation. 7 WD repeats span residues 106 to 145 (GHRSPVTRVIFHPVFSVIVSASEDATIKVWDHETGDFERT), 148 to 187 (GHTDSVQDISFDHTGKLLASCSADMTIKLWDFQGFECIRT), 190 to 229 (GHDHNVSSVAIMPNGDHIVSASRDKTIKMWEVATGYCVKT), 232 to 271 (GHREWVRMVRPNQDGTLIASSSNDQTVRVWVVATKECKAE), 274 to 333 (EHEH…CLMT), 336 to 375 (GHDNWVRGVLVHPGGKYIVSCADDKTLRIWDYKNKRCTKT), and 378 to 410 (AHEHFVTSLDFHKTAPYVVTGSVDQTVKVWECR).

Belongs to the WD repeat LIS1/nudF family. Can self-associate. Component of the cytosolic PAF-AH (I) heterotetrameric enzyme, which is composed of PAFAH1B1 (beta), PAFAH1B2 (alpha2) and PAFAH1B3 (alpha1) subunits. The catalytic activity of the enzyme resides in the alpha1 (PAFAH1B3) and alpha2 (PAFAH1B2) subunits, whereas the beta subunit (PAFAH1B1) has regulatory activity. Trimer formation is not essential for the catalytic activity. Interacts with dynein, dynactin, nde1 and ndel1.

The protein resides in the cytoplasm. The protein localises to the cytoskeleton. It localises to the microtubule organizing center. Its subcellular location is the centrosome. Functionally, regulatory subunit (beta subunit) of the cytosolic type I platelet-activating factor (PAF) acetylhydrolase (PAF-AH (I)), an enzyme that catalyzes the hydrolyze of the acetyl group at the sn-2 position of PAF and its analogs and participates in PAF inactivation. Regulates the PAF-AH (I) activity in a catalytic dimer composition-dependent manner. Positively regulates the activity of the minus-end directed microtubule motor protein dynein. May enhance dynein-mediated microtubule sliding by targeting dynein to the microtubule plus end. Required for several dynein- and microtubule-dependent processes such as the maintenance of Golgi integrity, the peripheral transport of microtubule fragments and the coupling of the nucleus and centrosome. May be required for proliferation of neuronal precursors and neuronal migration. The protein is Lissencephaly-1 homolog A (pafah1b1a) of Danio rerio (Zebrafish).